The sequence spans 547 residues: Kelch repeat and BTB domain-containing protein 2 (547 aa).

The BTB domain occupies 20-89 (CDVIITIGDG…LYNRHISSMN (70 aa)). Kelch repeat units follow at residues 295–342 (DIII…VIDD), 343–389 (TIYA…VLDQ), and 391–454 (IYII…SHKD).

As to quaternary structure, interacts (via BTB domain) with host CUL3.

It is found in the host cytoplasm. Its function is as follows. Probable substrate-specific adapter of CUL3-containing E3 ubiquitin-protein ligases which mediate the ubiquitination and subsequent proteasomal degradation of host target proteins. This chain is Kelch repeat and BTB domain-containing protein 2 (KBTB2), found in Bos taurus (Bovine).